Here is a 152-residue protein sequence, read N- to C-terminus: Transcriptional regulator MraZ (152 aa).

2 consecutive SpoVT-AbrB domains span residues 5-52 and 81-124; these read ASAI…PIHE and AHEV…DEQA.

This sequence belongs to the MraZ family. As to quaternary structure, forms oligomers.

Its subcellular location is the cytoplasm. It is found in the nucleoid. The chain is Transcriptional regulator MraZ from Shewanella putrefaciens (strain CN-32 / ATCC BAA-453).